We begin with the raw amino-acid sequence, 263 residues long: Methylesterase 3 (263 aa).

Catalysis depends on Ser85, which acts as the Acyl-ester intermediate. Catalysis depends on charge relay system residues Asp213 and His241.

It belongs to the AB hydrolase superfamily. Methylesterase family.

It catalyses the reaction methyl (indol-3-yl)acetate + H2O = (indol-3-yl)acetate + methanol + H(+). It carries out the reaction methyl (-)-jasmonate + H2O = jasmonate + methanol + H(+). Its pathway is plant hormone biosynthesis. The protein operates within lipid metabolism; oxylipin biosynthesis. Methylesterase shown to have carboxylesterase activity, methyl indole-3-acetic acid (MeIAA) esterase activity and methyl jasmonate (MeJA) esterase activity in vitro. This Arabidopsis thaliana (Mouse-ear cress) protein is Methylesterase 3.